The sequence spans 386 residues: Short-chain dehydrogenase/reductase family 42E member 1 (386 aa).

The active-site Proton acceptor is Y150. K154 provides a ligand contact to NAD(+). A run of 2 helical transmembrane segments spans residues 279 to 299 (FPLS…FFIS) and 363 to 383 (YLIW…SWLP).

This sequence belongs to the 3-beta-HSD family.

The protein resides in the membrane. This is Short-chain dehydrogenase/reductase family 42E member 1 (sdr42e1) from Xenopus laevis (African clawed frog).